Here is a 501-residue protein sequence, read N- to C-terminus: Vitamin D 25-hydroxylase (501 aa).

The first 26 residues, 1–26, serve as a signal peptide directing secretion; sequence MWKLWRAEEGAAALGGALFLLLFALG. A250 contacts substrate. C448 is a binding site for heme.

It belongs to the cytochrome P450 family. In terms of assembly, homodimer. Requires heme as cofactor.

The protein resides in the endoplasmic reticulum membrane. The protein localises to the microsome membrane. It carries out the reaction calciol + reduced [NADPH--hemoprotein reductase] + O2 = calcidiol + oxidized [NADPH--hemoprotein reductase] + H2O + H(+). It catalyses the reaction vitamin D2 + reduced [NADPH--hemoprotein reductase] + O2 = 25-hydroxyvitamin D2 + oxidized [NADPH--hemoprotein reductase] + H2O + H(+). The enzyme catalyses 1alpha-hydroxyvitamin D2 + reduced [NADPH--hemoprotein reductase] + O2 = 1alpha,25-dihydroxyvitamin D2 + oxidized [NADPH--hemoprotein reductase] + H2O + H(+). The catalysed reaction is alfacalcidol + reduced [NADPH--hemoprotein reductase] + O2 = calcitriol + oxidized [NADPH--hemoprotein reductase] + H2O + H(+). It participates in hormone biosynthesis; vitamin D biosynthesis. In terms of biological role, a cytochrome P450 monooxygenase involved in activation of vitamin D precursors. Catalyzes hydroxylation at C-25 of both forms of vitamin D, vitamin D(2) and D(3) (calciol). Can metabolize vitamin D analogs/prodrugs 1alpha-hydroxyvitamin D(2) (doxercalciferol) and 1alpha-hydroxyvitamin D(3) (alfacalcidol) forming 25-hydroxy derivatives. Mechanistically, uses molecular oxygen inserting one oxygen atom into a substrate, and reducing the second into a water molecule, with two electrons provided by NADPH via cytochrome P450 reductase (CPR; NADPH-ferrihemoprotein reductase). In Homo sapiens (Human), this protein is Vitamin D 25-hydroxylase (CYP2R1).